The following is a 229-amino-acid chain: Protein-lysine N-methyltransferase EFM4 (229 aa).

This sequence belongs to the class I-like SAM-binding methyltransferase superfamily. EFM4 family.

It localises to the cytoplasm. It catalyses the reaction L-lysyl-[protein] + S-adenosyl-L-methionine = N(6)-methyl-L-lysyl-[protein] + S-adenosyl-L-homocysteine + H(+). It carries out the reaction N(6)-methyl-L-lysyl-[protein] + S-adenosyl-L-methionine = N(6),N(6)-dimethyl-L-lysyl-[protein] + S-adenosyl-L-homocysteine + H(+). S-adenosyl-L-methionine-dependent protein-lysine N-methyltransferase that mono- and dimethylates elongation factor 1-alpha (TEF1 and TEF2) at 'Lys-316'. May play a role in intracellular transport. This is Protein-lysine N-methyltransferase EFM4 from Saccharomyces cerevisiae (strain ATCC 204508 / S288c) (Baker's yeast).